We begin with the raw amino-acid sequence, 258 residues long: MLMVVSPAKSLDFESPLPSGLPATRPPMLDESARLADILRQMAPQDIAGLMQVSDKIAALNVARFAEWHADYSAPQARQAVFAFNGDVYEGLDAASMDRAGLDWLQPRLNILSGLYGLLRPLDLMLPYRLEMGTRLANPRGKDLYAFWGERITTELNARLQQDGSQVLVNLASDEYFRSVKPAQLAATVWTPVFRDSKAGGPYKIVSFWAKRARGLMVRWMAEQRIESPDDLRAFDVEGYRFNPAASNGTTLVFLRDH.

It belongs to the UPF0246 family.

This Laribacter hongkongensis (strain HLHK9) protein is UPF0246 protein LHK_02295.